The chain runs to 301 residues: Homeobox protein knotted-1-like 1 (301 aa).

The tract at residues 141–170 (CSGATSPPATTATHSDEMVGSSDEDQCSGE) is disordered. Low complexity predominate over residues 144–153 (ATSPPATTAT). Residues 188–208 (ELKEMLLKKYSGCLSRLRSEF) enclose the ELK domain. Residues 209–272 (LKKRKKGKLP…NQRKRHWKPS (64 aa)) constitute a DNA-binding region (homeobox; TALE-type).

This sequence belongs to the TALE/KNOX homeobox family.

It is found in the nucleus. Probable transcription factor that may be involved in shoot formation during early embryogenesis. The sequence is that of Homeobox protein knotted-1-like 1 (OSH6) from Oryza sativa subsp. japonica (Rice).